The sequence spans 500 residues: Probable malate:quinone oxidoreductase (500 aa).

The protein belongs to the MQO family. It depends on FAD as a cofactor.

It catalyses the reaction (S)-malate + a quinone = a quinol + oxaloacetate. It participates in carbohydrate metabolism; tricarboxylic acid cycle; oxaloacetate from (S)-malate (quinone route): step 1/1. The sequence is that of Probable malate:quinone oxidoreductase from Gluconobacter oxydans (strain 621H) (Gluconobacter suboxydans).